Here is a 449-residue protein sequence, read N- to C-terminus: Glutamyl-tRNA reductase (449 aa).

Residues 49–52 (TCNR), Ser-109, 114–116 (ETQ), and Gln-120 each bind substrate. The active-site Nucleophile is Cys-50. 189–194 (GAGKMS) lines the NADP(+) pocket. Residues 427–449 (NFTHPREEMEESDEKRSYCGESR) are disordered.

Belongs to the glutamyl-tRNA reductase family. As to quaternary structure, homodimer.

The enzyme catalyses (S)-4-amino-5-oxopentanoate + tRNA(Glu) + NADP(+) = L-glutamyl-tRNA(Glu) + NADPH + H(+). It participates in porphyrin-containing compound metabolism; protoporphyrin-IX biosynthesis; 5-aminolevulinate from L-glutamyl-tRNA(Glu): step 1/2. Functionally, catalyzes the NADPH-dependent reduction of glutamyl-tRNA(Glu) to glutamate 1-semialdehyde (GSA). The chain is Glutamyl-tRNA reductase from Carboxydothermus hydrogenoformans (strain ATCC BAA-161 / DSM 6008 / Z-2901).